A 148-amino-acid polypeptide reads, in one-letter code: Nucleoside diphosphate kinase (148 aa).

Positions 9, 57, 85, 91, 102, and 112 each coordinate ATP. Histidine 115 acts as the Pros-phosphohistidine intermediate in catalysis.

Belongs to the NDK family. As to quaternary structure, homotetramer. The cofactor is Mg(2+).

Its subcellular location is the cytoplasm. It catalyses the reaction a 2'-deoxyribonucleoside 5'-diphosphate + ATP = a 2'-deoxyribonucleoside 5'-triphosphate + ADP. The catalysed reaction is a ribonucleoside 5'-diphosphate + ATP = a ribonucleoside 5'-triphosphate + ADP. Functionally, major role in the synthesis of nucleoside triphosphates other than ATP. The ATP gamma phosphate is transferred to the NDP beta phosphate via a ping-pong mechanism, using a phosphorylated active-site intermediate. The sequence is that of Nucleoside diphosphate kinase from Macrococcus caseolyticus (strain JCSC5402) (Macrococcoides caseolyticum).